A 324-amino-acid polypeptide reads, in one-letter code: Glucokinase (324 aa).

6–11 (IDIGGT) serves as a coordination point for ATP.

It belongs to the bacterial glucokinase family.

Its subcellular location is the cytoplasm. The catalysed reaction is D-glucose + ATP = D-glucose 6-phosphate + ADP + H(+). This chain is Glucokinase, found in Zymomonas mobilis subsp. mobilis (strain ATCC 31821 / ZM4 / CP4).